The sequence spans 78 residues: Exodeoxyribonuclease 7 small subunit (78 aa).

Belongs to the XseB family. Heterooligomer composed of large and small subunits.

It is found in the cytoplasm. The enzyme catalyses Exonucleolytic cleavage in either 5'- to 3'- or 3'- to 5'-direction to yield nucleoside 5'-phosphates.. Its function is as follows. Bidirectionally degrades single-stranded DNA into large acid-insoluble oligonucleotides, which are then degraded further into small acid-soluble oligonucleotides. The polypeptide is Exodeoxyribonuclease 7 small subunit (Finegoldia magna (strain ATCC 29328 / DSM 20472 / WAL 2508) (Peptostreptococcus magnus)).